The following is a 429-amino-acid chain: Fez family zinc finger protein 1 (429 aa).

Residues 29-44 (PLAFSIERIMARTPEP) carry the Engrailed homology 1 repressor motif. 6 consecutive C2H2-type zinc fingers follow at residues 247–269 (FTCE…MPVH), 275–297 (FVCK…KIIH), 303–325 (HKCN…TRIH), 331–353 (FICE…KLTH), 359–381 (FKCN…MHTH), and 387–410 (FTCP…RKLH). The tract at residues 409–429 (LHDISPGPHSPPTPTGNTEGQ) is disordered.

This sequence belongs to the krueppel C2H2-type zinc-finger protein family.

The protein localises to the nucleus. Its function is as follows. Transcription repressor. Involved in the development of the forebrain region. This chain is Fez family zinc finger protein 1 (fezf1), found in Danio rerio (Zebrafish).